Reading from the N-terminus, the 209-residue chain is Large ribosomal subunit protein uL3 (209 aa).

Position 150 is an N5-methylglutamine (Gln150).

It belongs to the universal ribosomal protein uL3 family. As to quaternary structure, part of the 50S ribosomal subunit. Forms a cluster with proteins L14 and L19. In terms of processing, methylated by PrmB.

One of the primary rRNA binding proteins, it binds directly near the 3'-end of the 23S rRNA, where it nucleates assembly of the 50S subunit. This is Large ribosomal subunit protein uL3 from Buchnera aphidicola subsp. Acyrthosiphon pisum (strain 5A).